The chain runs to 274 residues: Putative pyruvate, phosphate dikinase regulatory protein (274 aa).

Residue 151–158 (GVSRTSKT) coordinates ADP.

This sequence belongs to the pyruvate, phosphate/water dikinase regulatory protein family. PDRP subfamily.

It catalyses the reaction N(tele)-phospho-L-histidyl/L-threonyl-[pyruvate, phosphate dikinase] + ADP = N(tele)-phospho-L-histidyl/O-phospho-L-threonyl-[pyruvate, phosphate dikinase] + AMP + H(+). The enzyme catalyses N(tele)-phospho-L-histidyl/O-phospho-L-threonyl-[pyruvate, phosphate dikinase] + phosphate + H(+) = N(tele)-phospho-L-histidyl/L-threonyl-[pyruvate, phosphate dikinase] + diphosphate. Bifunctional serine/threonine kinase and phosphorylase involved in the regulation of the pyruvate, phosphate dikinase (PPDK) by catalyzing its phosphorylation/dephosphorylation. This is Putative pyruvate, phosphate dikinase regulatory protein from Pelagibacter ubique (strain HTCC1062).